The sequence spans 266 residues: HLA class II histocompatibility antigen, DR beta 3 chain (266 aa).

The first 29 residues, 1 to 29 (MVCLKLPGGSSLAALTVTLMVLSSRLAFA), serve as a signal peptide directing secretion. The beta-1 stretch occupies residues 30 to 124 (GDTRPRFLEL…GESFTVQRRV (95 aa)). Residues 30–227 (GDTRPRFLEL…RARSESAQSK (198 aa)) lie on the Extracellular side of the membrane. Disulfide bonds link C44-C108 and C146-C202. N48 carries an N-linked (GlcNAc...) asparagine glycan. The tract at residues 125 to 227 (HPQVTVYPAK…RARSESAQSK (103 aa)) is beta-2. In terms of domain architecture, Ig-like C1-type spans 126-214 (PQVTVYPAKT…EHPSVTSALT (89 aa)). Residues 228–248 (MLSGVGGFVLGLLFLGAGLFI) traverse the membrane as a helical segment. Residues 249–266 (YFRNQKGHSGLQPTGFLS) are Cytoplasmic-facing.

The protein belongs to the MHC class II family. As to quaternary structure, heterotrimer that consists of an alpha chain HLA-DRA, a beta chain HLA-DRB1 and a peptide (peptide-MHCII). Newly synthesized alpha and beta chains forms a heterodimer (MHCII) that associates with the CD74/invariant chain (Ii) in the endoplasmic reticulum (ER). Ii is a trimer composed of three subunits and each subunit interacts with one MHCII dimer, blocking the peptide-binding cleft. As a result, MHCII molecules cannot bind peptides present in the ER. The complex of MHCII and CD74/Ii is transported in vesicles from ER to Golgi to lysosomes, where it encounters antigenic peptides generated via proteolysis of endocytosed antigens. MHCII dimers are dissociated from CD74/Ii by the combined action of proteolysis and HLA-DM. Lysosomal enzymes such as cathepsin, degrade CD74/Ii leaving a 24 amino acid remnant called class II-associated Ii or CLIP. Interacts (via the peptide binding cleft) with CLIP; this interaction inhibits antigen peptide binding before entry in the endosomal compartment. The displacement of CLIP and replacement by a high affinity peptide in lysosomes is performed by HLA-DM heterodimer. HLA-DM catalyzes CLIP dissociation from MHCII, stabilizes empty MHCII and mediates the selection of high affinity peptides. Interacts with HLA-DM heterodimer; this interaction is direct. Interacts with TCR (via CDR3). Interacts (via beta-2 domain) with CD4 coreceptor (via Ig-like V-type domain); this interaction is of exceptionally low affinity yet necessary for optimal recognition of antigenic peptides. In terms of processing, ubiquitinated by MARCHF1 and MARCHF8 at Lys-254 leading to sorting into the endosome system and down-regulation of MHC class II. Expressed in professional APCs: monocyte/macrophages, dendritic cells and B cells (at protein level).

The protein resides in the cell membrane. The protein localises to the endoplasmic reticulum membrane. It localises to the lysosome membrane. It is found in the late endosome membrane. Its subcellular location is the autolysosome membrane. In terms of biological role, a beta chain of antigen-presenting major histocompatibility complex class II (MHCII) molecule. In complex with the alpha chain HLA-DRA, displays antigenic peptides on professional antigen presenting cells (APCs) for recognition by alpha-beta T cell receptor (TCR) on HLA-DRB3-restricted CD4-positive T cells. This guides antigen-specific T-helper effector functions, both antibody-mediated immune response and macrophage activation, to ultimately eliminate the infectious agents and transformed cells. Typically presents extracellular peptide antigens of 10 to 30 amino acids that arise from proteolysis of endocytosed antigens in lysosomes. In the tumor microenvironment, presents antigenic peptides that are primarily generated in tumor-resident APCs likely via phagocytosis of apoptotic tumor cells or macropinocytosis of secreted tumor proteins. Presents peptides derived from intracellular proteins that are trapped in autolysosomes after macroautophagy, a mechanism especially relevant for T cell selection in the thymus and central immune tolerance. The selection of the immunodominant epitopes follows two processing modes: 'bind first, cut/trim later' for pathogen-derived antigenic peptides and 'cut first, bind later' for autoantigens/self-peptides. The anchor residue at position 1 of the peptide N-terminus, usually a large hydrophobic residue, is essential for high affinity interaction with MHCII molecules. ALLELE DRB3*01:01: Exclusively presents several immunogenic epitopes derived from C.tetani neurotoxin tetX, playing a significant role in immune recognition and long-term protection. Presents viral epitopes derived from HHV-6B U11, TRX2/U56 and U85 antigens to polyfunctional CD4-positive T cells with cytotoxic activity implicated in control of HHV-6B infection. Functionally, ALLELE DRB3*02:02 Exclusively presents several immunogenic epitopes derived from C.tetani neurotoxin tetX, playing a significant role in immune recognition and long-term protection. Upon EBV infection, presents to CD4-positive T cells latent antigen EBNA2 (PRSPTVFYNIPPMPLPPSQL) and lytic antigen BZLF1 (LTAYHVSTAPTGSWF) peptides, driving oligoclonal expansion and selection of virus-specific memory T cell subsets with cytotoxic potential to directly eliminate virus-infected B cells. Presents viral epitopes derived from HHV-6B U11, gB/U39 and gH/U48 antigens to polyfunctional CD4-positive T cells with cytotoxic activity implicated in control of HHV-6B infection. Plays a minor role in CD4-positive T cell immune response against Dengue virus by presenting conserved peptides from capsid and non-structural NS3 proteins. Displays peptides derived from IAV matrix protein M, implying a role in protection against IAV infection. In the context of tumor immunesurveillance, may present to T-helper 1 cells an immunogenic epitope derived from tumor-associated antigen WT1 (KRYFKLSHLQMHSRKH), likely providing for effective antitumor immunity in a wide range of solid and hematological malignancies. Presents to Vbeta2-positive T-helper 1 cells specifically an immunodominant peptide derived from tumor antigen CTAG1A/NY-ESO-1(PGVLLKEFTVSGNILTIRLTAADHR) and confers protective memory response. In metastatic epithelial tumors, presents to intratumoral CD4-positive T cells a TP53 neoantigen (HYNYMCNSSCMGSMNRRPILTIITL) carrying G245S hotspot driver mutation and may mediate tumor regression. Its function is as follows. ALLELE DRB3*03:01: Presents a series of conserved peptides derived from the M.tuberculosis PPE family of proteins, in particular PPE29 and PPE33, known to be highly immunogenic. Presents immunogenic epitopes derived from C.tetani neurotoxin tetX, playing a role in immune recognition and long-term protection. Displays immunodominant viral peptides from HCV non-structural protein NS2, as part of a broad range T-helper response to resolve infection. This is HLA class II histocompatibility antigen, DR beta 3 chain (HLA-DRB3) from Homo sapiens (Human).